The chain runs to 408 residues: Peptidoglycan muramidase Tse3 (408 aa).

Residues asparagine 181, aspartate 253, glutamine 254, glutamate 258, glutamate 375, serine 378, arginine 379, aspartate 382, and asparagine 384 each coordinate Ca(2+).

In terms of assembly, forms a heterotetramer with Tsi3 consisting of two Tse3 dimers and two Tsi3 dimers. Formation of the complex inactivates Tse3 enzymatic activity. The cofactor is Ca(2+).

It is found in the host membrane. The protein localises to the secreted. It carries out the reaction Hydrolysis of (1-&gt;4)-beta-linkages between N-acetylmuramic acid and N-acetyl-D-glucosamine residues in a peptidoglycan and between N-acetyl-D-glucosamine residues in chitodextrins.. Enzymatic activity depends on membrane binding. Its function is as follows. Toxin secreted by the H1 type VI (H1-T6SS) secretion system into the periplasm of recipient cells. Degrades peptidoglycan via muramidase activity thereby helping itself to compete with other bacteria. To protect itself, the bacterium synthesizes immunity protein Tsi3 that specifically interacts with and inactivates cognate toxin. This chain is Peptidoglycan muramidase Tse3, found in Pseudomonas aeruginosa (strain ATCC 15692 / DSM 22644 / CIP 104116 / JCM 14847 / LMG 12228 / 1C / PRS 101 / PAO1).